Consider the following 430-residue polypeptide: UDP-glucose 6-dehydrogenase AglM (430 aa).

The active site involves cysteine 269.

This sequence belongs to the UDP-glucose/GDP-mannose dehydrogenase family.

The enzyme catalyses UDP-alpha-D-glucose + 2 NAD(+) + H2O = UDP-alpha-D-glucuronate + 2 NADH + 3 H(+). It functions in the pathway nucleotide-sugar biosynthesis; UDP-alpha-D-glucuronate biosynthesis; UDP-alpha-D-glucuronate from UDP-alpha-D-glucose: step 1/1. Its pathway is cell surface structure biogenesis; S-layer biogenesis. Activity improves as salinity decreases. Functionally, involved in the assembly of a N-linked pentasaccharide that decorates the S-layer glycoprotein and flagellins. Involved in the biosynthesis of the hexuronic acids found at both positions 2 and 3 of the pentasaccharide. The protein is UDP-glucose 6-dehydrogenase AglM (aglM) of Haloferax volcanii (strain ATCC 29605 / DSM 3757 / JCM 8879 / NBRC 14742 / NCIMB 2012 / VKM B-1768 / DS2) (Halobacterium volcanii).